Consider the following 314-residue polypeptide: Methionyl-tRNA formyltransferase (314 aa).

109 to 112 (SLLP) serves as a coordination point for (6S)-5,6,7,8-tetrahydrofolate.

The protein belongs to the Fmt family.

It carries out the reaction L-methionyl-tRNA(fMet) + (6R)-10-formyltetrahydrofolate = N-formyl-L-methionyl-tRNA(fMet) + (6S)-5,6,7,8-tetrahydrofolate + H(+). Its function is as follows. Attaches a formyl group to the free amino group of methionyl-tRNA(fMet). The formyl group appears to play a dual role in the initiator identity of N-formylmethionyl-tRNA by promoting its recognition by IF2 and preventing the misappropriation of this tRNA by the elongation apparatus. The sequence is that of Methionyl-tRNA formyltransferase from Syntrophomonas wolfei subsp. wolfei (strain DSM 2245B / Goettingen).